The primary structure comprises 742 residues: Probable LRR receptor-like serine/threonine-protein kinase At2g02780 (742 aa).

Positions 1–25 (MQISLQIHLSSFTFLLLIFLLPVLS) are cleaved as a signal peptide. The Extracellular portion of the chain corresponds to 26–354 (ESQVASSESQ…KDSARIKLGL (329 aa)). LRR repeat units lie at residues 74–96 (HGHV…SFHK), 104–128 (LSSL…IITK), 130–154 (SPSL…IVSL), 156–177 (NLKS…DLRG), 178–204 (LSNL…KLTT), 206–223 (SLKN…IKKL), 224–247 (NNLQ…LFSI), 249–271 (SLQI…SCTS), and 273–294 (KIIT…CYSS). Residue asparagine 85 is glycosylated (N-linked (GlcNAc...) asparagine). N-linked (GlcNAc...) asparagine glycosylation is present at asparagine 137. Asparagine 209 carries N-linked (GlcNAc...) asparagine glycosylation. Residue asparagine 266 is glycosylated (N-linked (GlcNAc...) asparagine). A glycan (N-linked (GlcNAc...) asparagine) is linked at asparagine 299. Residues 355 to 375 (VILIIIGVIILAAILVLLVLI) traverse the membrane as a helical segment. Topologically, residues 376-742 (ALKRRRSRSE…HESSMKAIYE (367 aa)) are cytoplasmic. Residues 386–424 (DDPFEVNNSNNERHASDKVSVCSTTTASSKSLPDSRRVP) are disordered. Residues 406–417 (VCSTTTASSKSL) are compositionally biased toward polar residues. The Protein kinase domain maps to 426–720 (TMRSAVIGLP…DVVWNLQYTI (295 aa)).

The protein belongs to the protein kinase superfamily. Ser/Thr protein kinase family.

It localises to the membrane. The catalysed reaction is L-seryl-[protein] + ATP = O-phospho-L-seryl-[protein] + ADP + H(+). The enzyme catalyses L-threonyl-[protein] + ATP = O-phospho-L-threonyl-[protein] + ADP + H(+). This chain is Probable LRR receptor-like serine/threonine-protein kinase At2g02780, found in Arabidopsis thaliana (Mouse-ear cress).